Reading from the N-terminus, the 410-residue chain is HAUS augmin-like complex subunit 8 (410 aa).

Residues Met1–Leu104 are disordered. Residue Ala2 is modified to N-acetylalanine. Ser105 is modified (phosphoserine). A disordered region spans residues Gln118 to Ser143. Residues Leu156–Leu208 are a coiled coil. The segment at Ala353–Ser410 is disordered. The segment covering Gly373–Ile384 has biased composition (polar residues). Residues Ser385 to Ser394 show a composition bias toward low complexity.

It belongs to the HAUS8 family. As to quaternary structure, component of the HAUS augmin-like complex. The complex interacts with the gamma-tubulin ring complex and this interaction is required for spindle assembly. Associates with microtubules. The interaction with microtubules is strong during mitosis, while it is weak or absent during interphase. It is unclear whether this interaction is direct or indirect. Interacts with EML3 (phosphorylated at 'Thr-881') and TUBG1.

It localises to the cytoplasm. The protein localises to the cytoskeleton. Its subcellular location is the microtubule organizing center. It is found in the centrosome. The protein resides in the spindle. It localises to the spindle pole. Functionally, contributes to mitotic spindle assembly, maintenance of centrosome integrity and completion of cytokinesis as part of the HAUS augmin-like complex. The chain is HAUS augmin-like complex subunit 8 (HAUS8) from Homo sapiens (Human).